The chain runs to 411 residues: MDDKFASKFEIDVLNKLLNKNFSYDLAIILKKIGGLDYRKKVFINGECIGILEFDLIDLDWKFHPYASYYLIEEPKIKIKPTKRKLKGKKVPVDLIENAEELKDINENDYVGVEVGNYVGVAVKKGDTIKIKDLTLKKELRFEKIEDYLRKNKDRIEKLEKKSLSIIKKYYEMCKNKNYAINTSFSGGKDSSVSTLLANKVIDDLEVIFIDTGLEFKDTIDFVKKFAKKYDLNLVVLKGKNFWEYLEKEGIPTKDYRWCNSVCKLEPLKEYLKKYKRVYTIDGSRRYESFTREKLTYERKSGFIENQINIFPILDWRGTDVWSWIYLNDVIYNELYDKGFERIGCYMCPAALNAEFLRVKELYPELFNKWVDVLKRFGYDEDEILRGFWRWKELPPKMKELKKILENKEKK.

It in the C-terminal section; belongs to the PAPS reductase family.

This is an uncharacterized protein from Methanocaldococcus jannaschii (strain ATCC 43067 / DSM 2661 / JAL-1 / JCM 10045 / NBRC 100440) (Methanococcus jannaschii).